A 206-amino-acid chain; its full sequence is Max dimerization protein 3 (206 aa).

The interval 8 to 25 is interaction with SIN3A and SIN3B; that stretch reads IQVLLQAAEFLERREREA. Disordered stretches follow at residues 29-66 and 122-171; these read YASLCPHHSPGTVCRRRKPPLQAPGALNSGRSVHNELE and KLRS…QEDL. One can recognise a bHLH domain in the interval 57–109; sequence SGRSVHNELEKRRRAQLKRCLEQLRQQMPLGVDCTRYTTLSLLRRARVHIQKL. Over residues 126–138 the composition is skewed to low complexity; it reads KQQSLQQQLEQLQ. Over residues 143–153 the composition is skewed to basic and acidic residues; the sequence is ARERERLRADS.

In terms of assembly, efficient DNA binding requires dimerization with another bHLH protein. Binds DNA as a heterodimer with MAX. Interacts with SIN3A AND SIN3B. Interacts with RNF17. In terms of tissue distribution, expressed only in the proliferating areas of the testis and thymus.

Its subcellular location is the nucleus. Its function is as follows. Transcriptional repressor. Binds with MAX to form a sequence-specific DNA-binding protein complex which recognizes the core sequence 5'-CAC[GA]TG-3'. Antagonizes MYC transcriptional activity by competing for MAX and suppresses MYC dependent cell transformation. The protein is Max dimerization protein 3 (Mxd3) of Mus musculus (Mouse).